We begin with the raw amino-acid sequence, 302 residues long: Protein TILLER ANGLE CONTROL 1 (302 aa).

The IGT motif signature appears at 57 to 63 (GILTIGT). 2 disordered regions span residues 82–115 (ESEE…VEDE) and 159–180 (EGSS…KNKK). Positions 99-115 (DDDDDDDEHYDHSVEDE) are enriched in acidic residues. Positions 162–175 (SEISTKPDQSANDQ) are enriched in polar residues.

It belongs to the TAC family. In terms of tissue distribution, highly expressed in flower buds. Expressed in branch attachment sites, vegetative buds and young fruits.

Its function is as follows. Involved in the regulation of axillary shoot growth angle. Promotes horizontal shoot growth. The sequence is that of Protein TILLER ANGLE CONTROL 1 from Prunus persica (Peach).